Here is a 545-residue protein sequence, read N- to C-terminus: Chaperonin GroEL (545 aa).

Residues Thr30–Pro33, Lys51, Asp87–Thr91, Gly415, and Asp495 contribute to the ATP site.

The protein belongs to the chaperonin (HSP60) family. As to quaternary structure, forms a cylinder of 14 subunits composed of two heptameric rings stacked back-to-back. Interacts with the co-chaperonin GroES.

The protein localises to the cytoplasm. The catalysed reaction is ATP + H2O + a folded polypeptide = ADP + phosphate + an unfolded polypeptide.. Functionally, together with its co-chaperonin GroES, plays an essential role in assisting protein folding. The GroEL-GroES system forms a nano-cage that allows encapsulation of the non-native substrate proteins and provides a physical environment optimized to promote and accelerate protein folding. This Shewanella baltica (strain OS185) protein is Chaperonin GroEL.